The following is a 453-amino-acid chain: Maltotriose-binding protein (453 aa).

The N-terminal stretch at 1 to 29 (MKRGIYAVLLVGVLIFSVVASGCIGGTQT) is a signal peptide. The segment covering 27-65 (TQTQTETQTPEKTQTPTTTQPSPTTTTSPTQTTSQTPTE) has biased composition (low complexity). Residues 27-73 (TQTQTETQTPEKTQTPTTTQPSPTTTTSPTQTTSQTPTETETHTQEA) form a disordered region.

Belongs to the bacterial solute-binding protein 1 family.

Involved in an abc transport system for maltotriose. The sequence is that of Maltotriose-binding protein (malE) from Pyrococcus abyssi (strain GE5 / Orsay).